The primary structure comprises 138 residues: NADH dehydrogenase [ubiquinone] 1 alpha subcomplex subunit N7BM (138 aa).

This sequence belongs to the complex I NDUFA12 subunit family. In terms of assembly, complex I is composed of 42 different subunits.

The protein resides in the mitochondrion inner membrane. Functionally, accessory subunit of the mitochondrial membrane respiratory chain NADH dehydrogenase (Complex I), that is believed not to be involved in catalysis. Complex I functions in the transfer of electrons from NADH to the respiratory chain. The immediate electron acceptor for the enzyme is believed to be ubiquinone. This Yarrowia lipolytica (strain CLIB 122 / E 150) (Yeast) protein is NADH dehydrogenase [ubiquinone] 1 alpha subcomplex subunit N7BM.